Consider the following 482-residue polypeptide: MNEIIGKFAREGILIEDNAYFRLREMDDPASVSSELIVKIKSNGGKFTVLTSEMLDEFFEIDNPAEIKARGPLMVPAERDFDFEVISDTSNRSYTSGEIGDMIAYFNSRYSSLKNLLSKRPELKGHIPIADLRGGEDVVSIIGMVNDVRNTKNNHRIIELEDDTGEISVVVHNENHKLFEKSEKIVRDEVVGVHGTKKGRFVVASEIFHPGVPRIQEKEMDFSVAFISDVHIGSQTFLEDAFMKFVKWINGDFGSEEQRSLAADVKYLVVAGDIVDGIGIYPGQEKELLIRDIHEQYEEAARLFGDIRSDIKIVMIPGNHDSSRIAEPQPAIPEEYAKSLYSIRNIEFLSNPSLVSLDGVRTLIYHGRSFDDMAMSVNGLSHERSDLIMEELLEKRHLAPIYGERTPLASEIEDHLVIDEVPHVLHTGHVHINAYKKYKGVHLINSGTFQSQTEFQKIYNIVPTCGQVPVLNRGVMKLLEFS.

It belongs to the DNA polymerase delta/II small subunit family. Heterodimer of a large subunit and a small subunit.

It catalyses the reaction DNA(n) + a 2'-deoxyribonucleoside 5'-triphosphate = DNA(n+1) + diphosphate. It carries out the reaction Exonucleolytic cleavage in the 3'- to 5'-direction to yield nucleoside 5'-phosphates.. In terms of biological role, possesses two activities: a DNA synthesis (polymerase) and an exonucleolytic activity that degrades single-stranded DNA in the 3' to 5' direction. Has a template-primer preference which is characteristic of a replicative DNA polymerase. The polypeptide is DNA polymerase II small subunit (polB) (Methanothermobacter thermautotrophicus (strain ATCC 29096 / DSM 1053 / JCM 10044 / NBRC 100330 / Delta H) (Methanobacterium thermoautotrophicum)).